Here is a 57-residue protein sequence, read N- to C-terminus: Lantibiotic nisin-Z (57 aa).

Residues 1-23 (MSTKDFNLDLVSVSKKDSGASPR) constitute a propeptide that is removed on maturation. Thr25 is subject to 2,3-didehydrobutyrine. The lanthionine (Ser-Cys) cross-link spans 26–30 (SISLC). Ser28 carries the 2,3-didehydroalanine (Ser) modification. Cross-links (beta-methyllanthionine (Thr-Cys)) lie at residues 31–34 (TPGC), 36–42 (TGALMGC), 46–49 (TATC), and 48–51 (TCNC). A 2,3-didehydroalanine (Ser) modification is found at Ser56.

This sequence belongs to the type A lantibiotic family. Post-translationally, maturation of lantibiotics involves the enzymatic conversion of Thr, and Ser into dehydrated AA and the formation of thioether bonds with cysteine. This is followed by membrane translocation and cleavage of the modified precursor. In terms of processing, the structure of the 2,3-didehydrobutyrine is not discussed in PubMed:15361862. It is probably the Z-isomer by similarity.

Its function is as follows. Lanthionine-containing peptide antibiotic (lantibiotic) active on Gram-positive bacteria. The bactericidal activity of lantibiotics is based on depolarization of energized bacterial cytoplasmic membranes, initiated by the formation of aqueous transmembrane pores. This chain is Lantibiotic nisin-Z (nisZ), found in Lactococcus lactis subsp. lactis (Streptococcus lactis).